The chain runs to 225 residues: UPF0173 metal-dependent hydrolase PF1764 (225 aa).

This sequence belongs to the UPF0173 family.

This chain is UPF0173 metal-dependent hydrolase PF1764, found in Pyrococcus furiosus (strain ATCC 43587 / DSM 3638 / JCM 8422 / Vc1).